Reading from the N-terminus, the 220-residue chain is 7-cyano-7-deazaguanine synthase (220 aa).

An ATP-binding site is contributed by 10–20; that stretch reads FSGGQDSTTCL. Zn(2+) contacts are provided by Cys186, Cys195, Cys198, and Cys201.

This sequence belongs to the QueC family. In terms of assembly, homodimer. It depends on Zn(2+) as a cofactor.

It catalyses the reaction 7-carboxy-7-deazaguanine + NH4(+) + ATP = 7-cyano-7-deazaguanine + ADP + phosphate + H2O + H(+). It participates in purine metabolism; 7-cyano-7-deazaguanine biosynthesis. Catalyzes the ATP-dependent conversion of 7-carboxy-7-deazaguanine (CDG) to 7-cyano-7-deazaguanine (preQ(0)). The chain is 7-cyano-7-deazaguanine synthase from Bacillus cereus (strain AH187).